Here is a 363-residue protein sequence, read N- to C-terminus: 3-methyl-D-ornithine--L-lysine ligase (363 aa).

Lysine 10 is an ATP binding site. 11-12 (LQ) contacts L-lysine. ATP-binding positions include aspartate 31, 49–50 (DV), and 72–73 (EN). Glutamate 72 provides a ligand contact to L-lysine. ADP is bound by residues lysine 104, lysine 131, serine 138, and 160 to 163 (EEYV). Residues 169 to 171 (SLE) and aspartate 225 contribute to the D-ornithine site. Residues glutamate 227, glutamate 239, and aspartate 241 each contribute to the Mg(2+) site. An ADP-binding site is contributed by glutamate 239. D-ornithine is bound by residues 243–248 (RFPSQT) and glutamate 302. Residues serine 246 and glutamate 302 each contribute to the L-lysine site.

The protein belongs to the PylC family. It depends on Mg(2+) as a cofactor.

The enzyme catalyses (3R)-3-methyl-D-ornithine + L-lysine + ATP = (3R)-3-methyl-D-ornithyl-N(6)-L-lysine + ADP + phosphate + H(+). Its pathway is amino-acid biosynthesis; L-pyrrolysine biosynthesis. Is required for the biosynthesis of pyrrolysine. Catalyzes the ATP-dependent ligation between (3R)-3-methyl-D-ornithine and L-lysine, leading to (3R)-3-methyl-D-ornithyl-N6-L-lysine. This is 3-methyl-D-ornithine--L-lysine ligase from Methanosarcina barkeri (strain Fusaro / DSM 804).